The chain runs to 230 residues: MSENRTLMLNGMWNNNPALVQLLGLCPLLAVSSTVTNALGLGIATLLVLVGSNVTVSLVRDYVPKEVRIPVFVMIIASLVTCVQLLMNAYAYGLYLSLGIFIPLIVTNCIIIGRAEAFASKNDVLPAALDGFWMGLGMTSVLVVLGSLREIIGNGTLFDGADLLLGEWAKVLRIEVFHFDSAFLLALLPPGAFIGVGFLIAAKSVIDKQIAARQPKQQKQAIERARVTNV.

The Cytoplasmic portion of the chain corresponds to 1–17 (MSENRTLMLNGMWNNNP). 2 helical membrane passes run 18–38 (ALVQ…VTNA) and 39–59 (LGLG…VSLV). Over 60 to 68 (RDYVPKEVR) the chain is Cytoplasmic. A helical transmembrane segment spans residues 69-89 (IPVFVMIIASLVTCVQLLMNA). Residues 90–92 (YAY) are Periplasmic-facing. The helical transmembrane segment at 93 to 113 (GLYLSLGIFIPLIVTNCIIIG) threads the bilayer. Residues 114–123 (RAEAFASKND) are Cytoplasmic-facing. Residues 124–144 (VLPAALDGFWMGLGMTSVLVV) form a helical membrane-spanning segment. At 145–181 (LGSLREIIGNGTLFDGADLLLGEWAKVLRIEVFHFDS) the chain is on the periplasmic side. Residues 182-202 (AFLLALLPPGAFIGVGFLIAA) form a helical membrane-spanning segment. Over 203-230 (KSVIDKQIAARQPKQQKQAIERARVTNV) the chain is Cytoplasmic.

It belongs to the NqrDE/RnfAE family. The complex is composed of six subunits: RnfA, RnfB, RnfC, RnfD, RnfE and RnfG.

It localises to the cell inner membrane. Its function is as follows. Part of a membrane-bound complex that couples electron transfer with translocation of ions across the membrane. The sequence is that of Ion-translocating oxidoreductase complex subunit E from Vibrio cholerae serotype O1 (strain ATCC 39541 / Classical Ogawa 395 / O395).